A 432-amino-acid chain; its full sequence is EF-hand calcium-binding domain-containing protein 3 (432 aa).

EF-hand domains lie at 45–80 (AQLE…LGMN) and 81–116 (LNTY…KKLF). D94, D96, D98, K100, and D105 together coordinate Ca(2+). Y273 carries the phosphotyrosine modification. Residues 394–432 (SMNKSSPSNSGLSSPSDFSESDPETGRKRKRKSSRGFRQ) are disordered. The span at 395–411 (MNKSSPSNSGLSSPSDF) shows a compositional bias: low complexity. A compositionally biased stretch (basic residues) spans 420 to 432 (RKRKRKSSRGFRQ).

This chain is EF-hand calcium-binding domain-containing protein 3 (Efcab3), found in Mus musculus (Mouse).